We begin with the raw amino-acid sequence, 290 residues long: Arginine N-acetyltransferase avaD (290 aa).

N157–A163 lines the acetyl-CoA pocket.

The protein belongs to the acetyltransferase family. GCN5 subfamily.

Its pathway is secondary metabolite metabolism. Arginine N-acetyltransferase; part of the cluster that mediates the biosynthesis of a highly modified cyclo-arginine-tryptophan dipeptide (cRW). Within the pathway, avaD catalyzes the N-acetylation of the guanidine group. The first step of the pathway is perfornmed by the arginine-containing cyclodipeptide synthase (RCPDS) avaA that acts as the scaffold-generating enzyme and is responsible for formation of the cyclo-Arg-Trp (cRW) diketopiperazine. AvaB then acts as a multifunctional flavoenzyme that is responsible for generating the cyclo-Arg-formylkynurenine DKP, which can be deformylated by avaC. AvaB then further catalyzes an additional N-oxidation followed by cyclization and dehydration. The next step is an N-acetylation of the guanidine group catalyzed by the arginine N-acetyltransferase avaD. The roles of the additional enzymes identified within the ava cluster still have to be determined. The chain is Arginine N-acetyltransferase avaD from Aspergillus versicolor.